We begin with the raw amino-acid sequence, 571 residues long: Sulfite reductase [NADPH] hemoprotein beta-component (571 aa).

Positions 435, 441, 480, and 484 each coordinate [4Fe-4S] cluster. Cysteine 484 provides a ligand contact to siroheme.

Belongs to the nitrite and sulfite reductase 4Fe-4S domain family. As to quaternary structure, alpha(8)-beta(8). The alpha component is a flavoprotein, the beta component is a hemoprotein. It depends on siroheme as a cofactor. [4Fe-4S] cluster serves as cofactor.

The catalysed reaction is hydrogen sulfide + 3 NADP(+) + 3 H2O = sulfite + 3 NADPH + 4 H(+). It participates in sulfur metabolism; hydrogen sulfide biosynthesis; hydrogen sulfide from sulfite (NADPH route): step 1/1. Its function is as follows. Component of the sulfite reductase complex that catalyzes the 6-electron reduction of sulfite to sulfide. This is one of several activities required for the biosynthesis of L-cysteine from sulfate. This chain is Sulfite reductase [NADPH] hemoprotein beta-component, found in Serratia proteamaculans (strain 568).